We begin with the raw amino-acid sequence, 161 residues long: Transcription initiation factor TFIID subunit 12 (161 aa).

Positions 15–55 (FSSIKPEPASTPPQGSMANSTAVVKIPGTPGAGGRLSPENN) are disordered. A Glycyl lysine isopeptide (Lys-Gly) (interchain with G-Cter in SUMO2) cross-link involves residue Lys-19. The span at 26–36 (PPQGSMANSTA) shows a compositional bias: polar residues. Position 43 is a phosphothreonine (Thr-43). Ser-51 carries the phosphoserine modification. At Thr-59 the chain carries Phosphothreonine. In terms of domain architecture, Histone-fold spans 59 to 126 (TKKKLQDLVR…QLHLERQWNM (68 aa)).

It belongs to the TAF12 family. In terms of assembly, component of the TFIID basal transcription factor complex, composed of TATA-box-binding protein TBP, and a number of TBP-associated factors (TAFs), including TAF1, TAF2, TAF3, TAF4, TAF5, TAF6, TAF7, TAF8, TAF9, TAF10, TAF11, TAF12 and TAF13. Component of the TATA-binding protein-free TAF complex (TFTC), the PCAF histone acetylase complex and the STAGA transcription coactivator-HAT complex. Component of the PCAF complex, at least composed of TADA2L/ADA2, TADA3L/ADA3, TAF5L/PAF65-beta, SUPT3H, TAF6L, TAF9, TAF10, TAF12 and TRRAP. Component of the STAGA transcription coactivator-HAT complex, at least composed of SUPT3H, GCN5L2, TAF5L, TAF6L, STAF65-gamma/SUPT7L, TADA3L, TAD1L, TAF10, TAF12, TRRAP and TAF9. Interacts with ATF7 (via the transactivation domain); the interaction is prevented by sumoylation of ATF7. As to quaternary structure, interacts with TBP; the interaction is direct. Interacts with TAF10; the interaction is direct. Interacts with ATF7, promoting transactivation by ATF7. Does not promote the transactivation of ATF7. In terms of tissue distribution, ubiquitous.

The protein localises to the nucleus. The TFIID basal transcription factor complex plays a major role in the initiation of RNA polymerase II (Pol II)-dependent transcription. TFIID recognizes and binds promoters with or without a TATA box via its subunit TBP, a TATA-box-binding protein, and promotes assembly of the pre-initiation complex (PIC). The TFIID complex consists of TBP and TBP-associated factors (TAFs), including TAF1, TAF2, TAF3, TAF4, TAF5, TAF6, TAF7, TAF8, TAF9, TAF10, TAF11, TAF12 and TAF13. Component of the TATA-binding protein-free TAF complex (TFTC), the PCAF histone acetylase complex and the STAGA transcription coactivator-HAT complex. This is Transcription initiation factor TFIID subunit 12 from Homo sapiens (Human).